We begin with the raw amino-acid sequence, 299 residues long: S-fimbrial protein subunit SfaH (299 aa).

This sequence belongs to the fimbrial protein family.

It is found in the fimbrium. In terms of biological role, fimbriae (also called pili), polar filaments radiating from the surface of the bacterium to a length of 0.5-1.5 micrometers and numbering 100-300 per cell, enable bacteria to colonize the epithelium of specific host organs. Its function is as follows. A minor fimbrial subunit. This protein is necessary for full expression of S-specific binding. S-fimbrial adhesins enable pathogenic E.coli causing urinary-tract infections or newborn meningitis to attach to glycoproteins terminating with alpha-sialic acid-(2-3)-beta-Gal. The protein is S-fimbrial protein subunit SfaH (sfaH) of Escherichia coli O6:K15:H31 (strain 536 / UPEC).